The sequence spans 227 residues: ATP-dependent dethiobiotin synthetase BioD (227 aa).

ATP is bound at residue 13 to 18 (DVGKTV). Thr17 is a binding site for Mg(2+). Lys38 is an active-site residue. Residues Asp55, 116-119 (EGAG), 176-177 (NR), and 205-207 (PYI) contribute to the ATP site. Residues Asp55 and Glu116 each contribute to the Mg(2+) site.

The protein belongs to the dethiobiotin synthetase family. As to quaternary structure, homodimer. Requires Mg(2+) as cofactor.

It localises to the cytoplasm. The enzyme catalyses (7R,8S)-7,8-diammoniononanoate + CO2 + ATP = (4R,5S)-dethiobiotin + ADP + phosphate + 3 H(+). The protein operates within cofactor biosynthesis; biotin biosynthesis; biotin from 7,8-diaminononanoate: step 1/2. Its function is as follows. Catalyzes a mechanistically unusual reaction, the ATP-dependent insertion of CO2 between the N7 and N8 nitrogen atoms of 7,8-diaminopelargonic acid (DAPA, also called 7,8-diammoniononanoate) to form a ureido ring. The sequence is that of ATP-dependent dethiobiotin synthetase BioD from Vibrio vulnificus (strain CMCP6).